We begin with the raw amino-acid sequence, 598 residues long: Elongation factor 4 (598 aa).

A tr-type G domain is found at lysine 2 to lysine 183. GTP is bound by residues aspartate 14 to threonine 19 and asparagine 130 to aspartate 133.

Belongs to the TRAFAC class translation factor GTPase superfamily. Classic translation factor GTPase family. LepA subfamily.

The protein localises to the cell inner membrane. It carries out the reaction GTP + H2O = GDP + phosphate + H(+). In terms of biological role, required for accurate and efficient protein synthesis under certain stress conditions. May act as a fidelity factor of the translation reaction, by catalyzing a one-codon backward translocation of tRNAs on improperly translocated ribosomes. Back-translocation proceeds from a post-translocation (POST) complex to a pre-translocation (PRE) complex, thus giving elongation factor G a second chance to translocate the tRNAs correctly. Binds to ribosomes in a GTP-dependent manner. In Flavobacterium psychrophilum (strain ATCC 49511 / DSM 21280 / CIP 103535 / JIP02/86), this protein is Elongation factor 4.